Consider the following 652-residue polypeptide: NAD(P)H-quinone oxidoreductase subunit 5, chloroplastic (652 aa).

Helical transmembrane passes span 9–29, 40–60, 91–111, 124–144, 147–167, 188–208, 225–245, 258–278, 289–309, 327–347, 354–374, 395–415, 424–444, 482–502, 526–546, and 630–650; these read WLIP…LISF, YSFL…LILF, PLTA…LIYT, FFAY…SPNL, IYVF…FWFT, GLLL…FDVI, LAIF…AQFP, TPIS…FLVA, FLMD…ATIA, LGYM…FHLM, ALLF…VGFN, GNAF…ACFW, AFVH…LTSF, TLPL…GTPF, LFIA…AYLI, and ILMI…YYSL.

It belongs to the complex I subunit 5 family. NDH is composed of at least 16 different subunits, 5 of which are encoded in the nucleus.

The protein localises to the plastid. It is found in the chloroplast thylakoid membrane. The enzyme catalyses a plastoquinone + NADH + (n+1) H(+)(in) = a plastoquinol + NAD(+) + n H(+)(out). It carries out the reaction a plastoquinone + NADPH + (n+1) H(+)(in) = a plastoquinol + NADP(+) + n H(+)(out). NDH shuttles electrons from NAD(P)H:plastoquinone, via FMN and iron-sulfur (Fe-S) centers, to quinones in the photosynthetic chain and possibly in a chloroplast respiratory chain. The immediate electron acceptor for the enzyme in this species is believed to be plastoquinone. Couples the redox reaction to proton translocation, and thus conserves the redox energy in a proton gradient. The chain is NAD(P)H-quinone oxidoreductase subunit 5, chloroplastic (ndhF) from Mesostigma viride (Green alga).